The chain runs to 48 residues: Histone H4 (48 aa).

Positions 1–14 (MGGKGGKGGKGLGK) are enriched in gly residues. The interval 1-23 (MGGKGGKGGKGLGKVGAKKRHSR) is disordered.

Belongs to the histone H4 family. The nucleosome is a histone octamer containing two molecules each of H2A, H2B, H3 and H4 assembled in one H3-H4 heterotetramer and two H2A-H2B heterodimers. The octamer wraps approximately 147 bp of DNA.

It is found in the nucleus. The protein resides in the chromosome. Functionally, core component of nucleosome. Nucleosomes wrap and compact DNA into chromatin, limiting DNA accessibility to the cellular machineries which require DNA as a template. Histones thereby play a central role in transcription regulation, DNA repair, DNA replication and chromosomal stability. DNA accessibility is regulated via a complex set of post-translational modifications of histones, also called histone code, and nucleosome remodeling. The chain is Histone H4 from Blepharisma japonicum.